A 420-amino-acid polypeptide reads, in one-letter code: Histidine--tRNA ligase (420 aa).

This sequence belongs to the class-II aminoacyl-tRNA synthetase family. As to quaternary structure, homodimer.

The protein localises to the cytoplasm. It catalyses the reaction tRNA(His) + L-histidine + ATP = L-histidyl-tRNA(His) + AMP + diphosphate + H(+). This chain is Histidine--tRNA ligase, found in Macrococcus caseolyticus (strain JCSC5402) (Macrococcoides caseolyticum).